The sequence spans 805 residues: Muscarinic acetylcholine receptor DM1 (805 aa).

The Extracellular segment spans residues 1–100 (MEPVMSLALA…GFETKGPRYS (100 aa)). Residues 27–43 (TSTTTTTTTTTSTTTTT) are compositionally biased toward low complexity. The segment at 27–47 (TSTTTTTTTTTSTTTTTASPA) is disordered. 3 N-linked (GlcNAc...) asparagine glycosylation sites follow: N65, N84, and N87. Residues 101–121 (LASMVVMGFVAAILSTVTVAG) traverse the membrane as a helical segment. The Cytoplasmic segment spans residues 122 to 141 (NVMVMISFKIDKQLQTISNY). The helical transmembrane segment at 142 to 162 (FLFSLAIADFAIGAISMPLFA) threads the bilayer. Residues 163–177 (VTTILGYWPLGPIVC) lie on the Extracellular side of the membrane. Residues 178-198 (DTWLALDYLASNASVLNLLII) traverse the membrane as a helical segment. At 199–220 (SFDRYFSVTRPLTYRAKRTTNR) the chain is on the cytoplasmic side. A helical membrane pass occupies residues 221–241 (AAVMIGAAWGISLLLWPPWIY). Residues 242–266 (SWPYIEGKRTVPKDECYIQFIETNQ) are Extracellular-facing. Residues 267 to 287 (YITFGTALAAFYFPVTIMCFL) form a helical membrane-spanning segment. Topologically, residues 288–718 (YWRIWRETKK…KRQESKAAKT (431 aa)) are cytoplasmic. 3 disordered regions span residues 302–322 (LPNL…SDEN), 340–359 (GNDH…DAES), and 507–530 (GNGN…VNGN). 2 stretches are compositionally biased toward basic and acidic residues: residues 308–318 (GKKDSSKRSNS) and 341–353 (NDHD…RSES). The segment covering 507-525 (GNGNGAINNNNNASHNGNG) has biased composition (low complexity). A helical membrane pass occupies residues 719 to 739 (LSAILLSFIITWTPYNILVLI). Residues 740–752 (KPLTTCSDCIPTE) lie on the Extracellular side of the membrane. A helical membrane pass occupies residues 753-773 (LWDFFYALCYINSTINPMCYA). The Cytoplasmic segment spans residues 774-805 (LCNATFRRTYVRILTCKWHTRNREGMVRGVYN).

Belongs to the G-protein coupled receptor 1 family. Muscarinic acetylcholine receptor subfamily. Intense staining in the glomeruli of the antennal lobes, the region of the nervous system containing terminals of antennal olfactory sensory neurons and mechanosensory neurons. Also a discrete group of neurosecretory cells in the pars intercerebralis of the brain.

It is found in the cell membrane. It localises to the postsynaptic cell membrane. The muscarinic acetylcholine receptor mediates various cellular responses, including inhibition of adenylate cyclase, breakdown of phosphoinositides and modulation of potassium channels through the action of G proteins. Primary transducing effect is Pi turnover. May have a role in the processing of olfactory and mechanosensory signals; regulation of neurosecretion. The polypeptide is Muscarinic acetylcholine receptor DM1 (mAChR-A) (Drosophila melanogaster (Fruit fly)).